Consider the following 113-residue polypeptide: Large ribosomal subunit protein bL19 (113 aa).

Belongs to the bacterial ribosomal protein bL19 family.

Its function is as follows. This protein is located at the 30S-50S ribosomal subunit interface and may play a role in the structure and function of the aminoacyl-tRNA binding site. The chain is Large ribosomal subunit protein bL19 from Rhodococcus erythropolis (strain PR4 / NBRC 100887).